A 128-amino-acid chain; its full sequence is uncharacterized protein (128 aa).

The HTH hxlR-type domain maps to 18 to 116 (CPVETTLDII…WGEKYKDRID (99 aa)).

This is an uncharacterized protein from Bacillus subtilis (strain 168).